The chain runs to 366 residues: Quinolinate synthase (366 aa).

Iminosuccinate contacts are provided by H44 and S61. C108 is a binding site for [4Fe-4S] cluster. Iminosuccinate-binding positions include 139 to 141 (YIN) and S160. [4Fe-4S] cluster is bound at residue C228. Iminosuccinate-binding positions include 254–256 (HPE) and T271. Position 318 (C318) interacts with [4Fe-4S] cluster.

It belongs to the quinolinate synthase family. Type 3 subfamily. [4Fe-4S] cluster serves as cofactor.

The protein resides in the cytoplasm. It catalyses the reaction iminosuccinate + dihydroxyacetone phosphate = quinolinate + phosphate + 2 H2O + H(+). The protein operates within cofactor biosynthesis; NAD(+) biosynthesis; quinolinate from iminoaspartate: step 1/1. In terms of biological role, catalyzes the condensation of iminoaspartate with dihydroxyacetone phosphate to form quinolinate. The sequence is that of Quinolinate synthase from Listeria monocytogenes serotype 4b (strain F2365).